The chain runs to 341 residues: Ketol-acid reductoisomerase (NADP(+)) (341 aa).

Positions 1 to 181 (MARVYREGDI…GCARAGVLET (181 aa)) constitute a KARI N-terminal Rossmann domain. Residues 24 to 27 (FGSQ), Ser-50, Ser-52, and 82 to 85 (DERQ) each bind NADP(+). His-107 is an active-site residue. Gly-133 serves as a coordination point for NADP(+). The KARI C-terminal knotted domain maps to 182 to 327 (TFAEETETDL…AELRALAAEG (146 aa)). The Mg(2+) site is built by Asp-190, Glu-194, Glu-226, and Glu-230. Residue Ser-251 participates in substrate binding.

It belongs to the ketol-acid reductoisomerase family. Requires Mg(2+) as cofactor.

The catalysed reaction is (2R)-2,3-dihydroxy-3-methylbutanoate + NADP(+) = (2S)-2-acetolactate + NADPH + H(+). The enzyme catalyses (2R,3R)-2,3-dihydroxy-3-methylpentanoate + NADP(+) = (S)-2-ethyl-2-hydroxy-3-oxobutanoate + NADPH + H(+). It participates in amino-acid biosynthesis; L-isoleucine biosynthesis; L-isoleucine from 2-oxobutanoate: step 2/4. Its pathway is amino-acid biosynthesis; L-valine biosynthesis; L-valine from pyruvate: step 2/4. Involved in the biosynthesis of branched-chain amino acids (BCAA). Catalyzes an alkyl-migration followed by a ketol-acid reduction of (S)-2-acetolactate (S2AL) to yield (R)-2,3-dihydroxy-isovalerate. In the isomerase reaction, S2AL is rearranged via a Mg-dependent methyl migration to produce 3-hydroxy-3-methyl-2-ketobutyrate (HMKB). In the reductase reaction, this 2-ketoacid undergoes a metal-dependent reduction by NADPH to yield (R)-2,3-dihydroxy-isovalerate. The chain is Ketol-acid reductoisomerase (NADP(+)) from Rubrobacter xylanophilus (strain DSM 9941 / JCM 11954 / NBRC 16129 / PRD-1).